A 102-amino-acid polypeptide reads, in one-letter code: ATP-dependent Clp protease adapter protein ClpS (102 aa).

This sequence belongs to the ClpS family. As to quaternary structure, binds to the N-terminal domain of the chaperone ClpA.

Involved in the modulation of the specificity of the ClpAP-mediated ATP-dependent protein degradation. The polypeptide is ATP-dependent Clp protease adapter protein ClpS (Shewanella pealeana (strain ATCC 700345 / ANG-SQ1)).